The chain runs to 229 residues: MSTWANLGLQDSASPLMEQLIFFHDHALLILVMITVLVGYLMFMLFFNSYVNRFLLHGQLIEMIWTILPAIILLFIAMPSLRLLYLLDEINEPSITLKSIGHQWYWSYEYSDFNNVEFDSYMIPTNELSNDGFRLLDVDNRIVLPMNSQIRILVTAADVIHSWTVPALGVKVDGTPGRLNQTNFFINRPGLFYGQCSEICGANHSFMPIVIESVPVNYFIKWISNSVNS.

Topologically, residues 1–26 are mitochondrial intermembrane; it reads MSTWANLGLQDSASPLMEQLIFFHDH. A helical transmembrane segment spans residues 27-48; it reads ALLILVMITVLVGYLMFMLFFN. The Mitochondrial matrix segment spans residues 49–62; the sequence is SYVNRFLLHGQLIE. A helical transmembrane segment spans residues 63–82; that stretch reads MIWTILPAIILLFIAMPSLR. Residues 83-229 are Mitochondrial intermembrane-facing; sequence LLYLLDEINE…IKWISNSVNS (147 aa). H161, C196, E198, C200, H204, and M207 together coordinate Cu cation. A Mg(2+)-binding site is contributed by E198.

Belongs to the cytochrome c oxidase subunit 2 family. In terms of assembly, component of the cytochrome c oxidase (complex IV, CIV), a multisubunit enzyme composed of a catalytic core of 3 subunits and several supernumerary subunits. The complex exists as a monomer or a dimer and forms supercomplexes (SCs) in the inner mitochondrial membrane with ubiquinol-cytochrome c oxidoreductase (cytochrome b-c1 complex, complex III, CIII). The cofactor is Cu cation.

It is found in the mitochondrion inner membrane. The catalysed reaction is 4 Fe(II)-[cytochrome c] + O2 + 8 H(+)(in) = 4 Fe(III)-[cytochrome c] + 2 H2O + 4 H(+)(out). Functionally, component of the cytochrome c oxidase, the last enzyme in the mitochondrial electron transport chain which drives oxidative phosphorylation. The respiratory chain contains 3 multisubunit complexes succinate dehydrogenase (complex II, CII), ubiquinol-cytochrome c oxidoreductase (cytochrome b-c1 complex, complex III, CIII) and cytochrome c oxidase (complex IV, CIV), that cooperate to transfer electrons derived from NADH and succinate to molecular oxygen, creating an electrochemical gradient over the inner membrane that drives transmembrane transport and the ATP synthase. Cytochrome c oxidase is the component of the respiratory chain that catalyzes the reduction of oxygen to water. Electrons originating from reduced cytochrome c in the intermembrane space (IMS) are transferred via the dinuclear copper A center (CU(A)) of subunit 2 and heme A of subunit 1 to the active site in subunit 1, a binuclear center (BNC) formed by heme A3 and copper B (CU(B)). The BNC reduces molecular oxygen to 2 water molecules using 4 electrons from cytochrome c in the IMS and 4 protons from the mitochondrial matrix. The protein is Cytochrome c oxidase subunit 2 (mt:CoII) of Drosophila miranda (Fruit fly).